A 258-amino-acid polypeptide reads, in one-letter code: UPF0246 protein ETA_07010 (258 aa).

The protein belongs to the UPF0246 family.

This chain is UPF0246 protein ETA_07010, found in Erwinia tasmaniensis (strain DSM 17950 / CFBP 7177 / CIP 109463 / NCPPB 4357 / Et1/99).